Here is a 213-residue protein sequence, read N- to C-terminus: N-(5'-phosphoribosyl)anthranilate isomerase (213 aa).

It belongs to the TrpF family.

The catalysed reaction is N-(5-phospho-beta-D-ribosyl)anthranilate = 1-(2-carboxyphenylamino)-1-deoxy-D-ribulose 5-phosphate. It participates in amino-acid biosynthesis; L-tryptophan biosynthesis; L-tryptophan from chorismate: step 3/5. This Methylibium petroleiphilum (strain ATCC BAA-1232 / LMG 22953 / PM1) protein is N-(5'-phosphoribosyl)anthranilate isomerase.